Reading from the N-terminus, the 156-residue chain is Radiation-inducible immediate-early gene IEX-1 (156 aa).

The disordered stretch occupies residues 1 to 62 (MCHSRSCHPT…SASRGHRKRS (62 aa)). At 1–82 (MCHSRSCHPT…RQLPVEEPNP (82 aa)) the chain is on the cytoplasmic side. A Phosphothreonine; by MAPK1 modification is found at threonine 18. Serine 31 bears the Phosphoserine mark. A compositionally biased stretch (low complexity) spans 44-55 (PAAAPAGRPSAS). The helical; Signal-anchor for type II membrane protein transmembrane segment at 83-99 (AKRLLFLLLTIVFCQIL) threads the bilayer. Over 100–156 (MAEEGVPAPLPPEDAPNAASLAPTPVSAVLEPFNLTSEPSDYALDLSTFLQQHPAAF) the chain is Extracellular. Threonine 123 bears the Phosphothreonine; by MAPK1 mark. Residue serine 126 is modified to Phosphoserine; by MAPK1. Asparagine 133 is a glycosylation site (N-linked (GlcNAc...) asparagine).

The protein belongs to the IER3 family. Interacts with the PPP2R5C-PP2A holoenzyme and ERK kinases; regulates ERK dephosphorylation. In terms of processing, phosphorylated at Thr-18, Thr-123 and Ser-126 by MAPK1/ERK2 and probably MAPK3/ERK1. Upon phosphorylation by MAPK1/ERK2 and MAPK3/ERK1, acquires the ability to inhibit cell death induced by various stimuli. Post-translationally, glycosylated.

The protein localises to the membrane. Its function is as follows. May play a role in the ERK signaling pathway by inhibiting the dephosphorylation of ERK by phosphatase PP2A-PPP2R5C holoenzyme. Also acts as an ERK downstream effector mediating survival. As a member of the NUPR1/RELB/IER3 survival pathway, may provide pancreatic ductal adenocarcinoma with remarkable resistance to cell stress, such as starvation or gemcitabine treatment. The sequence is that of Radiation-inducible immediate-early gene IEX-1 (IER3) from Homo sapiens (Human).